The chain runs to 1165 residues: Vacuolar segregation protein 7 (1165 aa).

Residues 1-919 are Cytoplasmic-facing; the sequence is MTEEDRKLTV…RKSPFVKVKN (919 aa). The interval 118–147 is disordered; it reads SVSSTNNNSNNALINHNPLSSHLSNPSSSL. Phosphoserine is present on serine 164. 4 disordered regions span residues 215–241, 274–423, 461–497, and 560–668; these read SNNTAPSTSNNIGSNTPPAPLLPLPSL, KAKN…SEKP, LIFPDSSSQQQQQQQQPPKQQQQQQNHGITSKISAPL, and EPPH…KRPL. Positions 216–230 are enriched in polar residues; that stretch reads NNTAPSTSNNIGSNT. The segment covering 334–345 has biased composition (low complexity); the sequence is TTSTKTAPSTAP. Polar residues predominate over residues 346–367; it reads LGSTDNTQALTASVSSSNADNH. Residues 375 to 391 show a composition bias toward low complexity; that stretch reads SSNNNGNNSNSASNKTN. Residues 393-412 show a composition bias toward polar residues; that stretch reads DIKNSNADLSASTSNNNAIN. Over residues 413–423 the composition is skewed to basic and acidic residues; sequence DDSHESNSEKP. Composition is skewed to low complexity over residues 469-485 and 562-571; these read QQQQQQQQPPKQQQQQQ and PHQLQQQQPP. Over residues 576-587 the composition is skewed to polar residues; it reads SVDSYTSDNPDS. The segment covering 599-613 has biased composition (low complexity); the sequence is SLVSLSKVSPHLLSS. The segment covering 614–662 has biased composition (polar residues); the sequence is TSSNGNTISCPNVATNSQELEPNNDISTKKSLSNSTLRHSSANRNSNYG. A helical; Signal-anchor for type II membrane protein transmembrane segment spans residues 920 to 940; that stretch reads FLYLAFVISSLLMTGFILGFL. The Vacuolar portion of the chain corresponds to 941-1165; that stretch reads LATNKELQDV…KDSMVHPGKK (225 aa). N-linked (GlcNAc...) asparagine glycosylation is found at asparagine 1020 and asparagine 1099. Positions 1074–1121 are disordered; sequence SPGSREAKHENDDDDDDDGDDGDDENNTNERQYKSKPNARDDKEDDTK. Positions 1085-1100 are enriched in acidic residues; the sequence is DDDDDDDGDDGDDENN. The segment covering 1111-1121 has biased composition (basic and acidic residues); sequence NARDDKEDDTK.

Component of the PI(3,5)P2 regulatory complex, composed of ATG18, FIG4, FAB1, VAC14 and VAC7. VAC14 nucleates the assembly of the complex and serves as a scaffold. In terms of processing, N-glycosylated.

It localises to the vacuole membrane. Functionally, the PI(3,5)P2 regulatory complex regulates both the synthesis and turnover of phosphatidylinositol 3,5-bisphosphate (PtdIns(3,5)P2). Positively regulates FAB1 kinase activity. Major activator of FAB1 during hyperosmotic shock and can elevate levels of PtdIns(3,5)P2 in the absence of VAC14 and FIG4. Directly involved in vacuolar membrane scission. Required for normal vacuole acidification, inheritance and morphology. The sequence is that of Vacuolar segregation protein 7 (VAC7) from Saccharomyces cerevisiae (strain ATCC 204508 / S288c) (Baker's yeast).